The chain runs to 117 residues: Large ribosomal subunit protein uL18 (117 aa).

Belongs to the universal ribosomal protein uL18 family. As to quaternary structure, part of the 50S ribosomal subunit; part of the 5S rRNA/L5/L18/L25 subcomplex. Contacts the 5S and 23S rRNAs.

Functionally, this is one of the proteins that bind and probably mediate the attachment of the 5S RNA into the large ribosomal subunit, where it forms part of the central protuberance. In Histophilus somni (strain 129Pt) (Haemophilus somnus), this protein is Large ribosomal subunit protein uL18.